Consider the following 425-residue polypeptide: Perilipin-2 (425 aa).

Ala2 carries the post-translational modification N-acetylalanine. A Phosphoserine modification is found at Ser213. Tyr230 is subject to Phosphotyrosine.

It belongs to the perilipin family. In terms of assembly, interacts with IRGC. In terms of processing, acylated; primarily with C14, C16 and C18 fatty acids. Phosphorylation at Tyr-230 by isoform 1 of CHKA (CHKalpha2) promotes dissociation from lipid droplets: dissociation is followed by recruitment of autophagosome machinery to lipid droplets and subsequent lipid droplet lipolysis. Post-translationally, polyubiquitination of Nt-acetylatable A-PLIN2 by MARCHF6 lead to degradation by 26S proteasomes. As to expression, adipose tissue specific. Expressed abundantly and preferentially in fat pads.

The protein localises to the membrane. The protein resides in the lipid droplet. Its function is as follows. Structural component of lipid droplets, which is required for the formation and maintenance of lipid storage droplets. The protein is Perilipin-2 of Mus musculus (Mouse).